We begin with the raw amino-acid sequence, 299 residues long: Nucleotide-binding protein SAV_6292 (299 aa).

23 to 30 provides a ligand contact to ATP; the sequence is GMSGAGRS. 74 to 77 contacts GTP; sequence DVRG.

Belongs to the RapZ-like family.

Displays ATPase and GTPase activities. The protein is Nucleotide-binding protein SAV_6292 of Streptomyces avermitilis (strain ATCC 31267 / DSM 46492 / JCM 5070 / NBRC 14893 / NCIMB 12804 / NRRL 8165 / MA-4680).